Reading from the N-terminus, the 267-residue chain is 2-keto-3-deoxy-L-rhamnonate aldolase (267 aa).

The active-site Proton acceptor is the H49. Q151 is a binding site for substrate. Residue E153 coordinates Mg(2+). Substrate is bound by residues A178 and D179. Mg(2+) is bound at residue D179.

It belongs to the HpcH/HpaI aldolase family. KDR aldolase subfamily. As to quaternary structure, homohexamer. It depends on Mg(2+) as a cofactor.

The catalysed reaction is 2-dehydro-3-deoxy-L-rhamnonate = (S)-lactaldehyde + pyruvate. Its function is as follows. Catalyzes the reversible retro-aldol cleavage of 2-keto-3-deoxy-L-rhamnonate (KDR) to pyruvate and lactaldehyde. This is 2-keto-3-deoxy-L-rhamnonate aldolase from Salmonella gallinarum (strain 287/91 / NCTC 13346).